The following is a 167-amino-acid chain: Crossover junction endodeoxyribonuclease RuvC (167 aa).

Active-site residues include aspartate 14, glutamate 75, and aspartate 147. Aspartate 14, glutamate 75, and aspartate 147 together coordinate Mg(2+).

The protein belongs to the RuvC family. Homodimer which binds Holliday junction (HJ) DNA. The HJ becomes 2-fold symmetrical on binding to RuvC with unstacked arms; it has a different conformation from HJ DNA in complex with RuvA. In the full resolvosome a probable DNA-RuvA(4)-RuvB(12)-RuvC(2) complex forms which resolves the HJ. It depends on Mg(2+) as a cofactor.

It localises to the cytoplasm. The enzyme catalyses Endonucleolytic cleavage at a junction such as a reciprocal single-stranded crossover between two homologous DNA duplexes (Holliday junction).. Its function is as follows. The RuvA-RuvB-RuvC complex processes Holliday junction (HJ) DNA during genetic recombination and DNA repair. Endonuclease that resolves HJ intermediates. Cleaves cruciform DNA by making single-stranded nicks across the HJ at symmetrical positions within the homologous arms, yielding a 5'-phosphate and a 3'-hydroxyl group; requires a central core of homology in the junction. The consensus cleavage sequence is 5'-(A/T)TT(C/G)-3'. Cleavage occurs on the 3'-side of the TT dinucleotide at the point of strand exchange. HJ branch migration catalyzed by RuvA-RuvB allows RuvC to scan DNA until it finds its consensus sequence, where it cleaves and resolves the cruciform DNA. The sequence is that of Crossover junction endodeoxyribonuclease RuvC from Synechocystis sp. (strain ATCC 27184 / PCC 6803 / Kazusa).